Consider the following 864-residue polypeptide: Mitochondrial 15S rRNA processing factor CCM1 (864 aa).

A mitochondrion-targeting transit peptide spans Met1 to Arg76. PPR repeat units lie at residues Asn319–His353 and Asp356–Pro390.

The protein belongs to the CCM1 family. As to quaternary structure, binds to mitochondrial small subunit 15S rRNA.

The protein localises to the mitochondrion. Regulates mitochondrial small subunit maturation by controlling 15S rRNA 5'-end processing. Localizes to the 5' precursor of the 15S rRNA in a position that is subsequently occupied by mS47 in the mature yeast mtSSU. Uses structure and sequence-specific RNA recognition, binding to a single-stranded region of the precursor and specifically recognizing bases -6 to -1. The exchange of Ccm1 for mS47 is coupled to the irreversible removal of precursor rRNA that is accompanied by conformational changes of the mitoribosomal proteins uS5m and mS26. These conformational changes signal completion of 5'-end rRNA processing through protection of the mature 5'-end of the 15S rRNA and stabilization of mS47. The removal of the 5' precursor together with the dissociation of Ccm1 may be catalyzed by the 5'-3' exoribonuclease Pet127. Involved in the specific removal of group I introns in mitochondrial encoded transcripts. This Saccharomyces cerevisiae (strain YJM789) (Baker's yeast) protein is Mitochondrial 15S rRNA processing factor CCM1 (CCM1).